Reading from the N-terminus, the 930-residue chain is Polypeptide N-acetylgalactosaminyltransferase 5 (930 aa).

Residues 1-12 (MNKIRKFFRGSG) lie on the Cytoplasmic side of the membrane. The helical; Signal-anchor for type II membrane protein transmembrane segment at 13–35 (RVLAFIFAASVIWLLFDMAALRL) threads the bilayer. The Lumenal portion of the chain corresponds to 36–930 (SFSEINAGLL…KWKFEKYYEV (895 aa)). Positions 190 to 209 (KQEAPQNYNVSSDTSKQASE) are disordered. Residues 193-209 (APQNYNVSSDTSKQASE) are compositionally biased toward polar residues. Asn-198, Asn-213, and Asn-283 each carry an N-linked (GlcNAc...) asparagine glycan. Residue Ser-285 is modified to Phosphoserine. N-linked (GlcNAc...) asparagine glycans are attached at residues Asn-287, Asn-309, Asn-355, and Asn-387. The interval 327 to 381 (DTKEVPNSKTQTVFPKLLGGSPHKQIPRNQSKTSSSPPALKKAVSQSKPTISGGL) is disordered. Positions 353–363 (PRNQSKTSSSP) are enriched in polar residues. 3 disulfides stabilise this stretch: Cys-476/Cys-708, Cys-699/Cys-779, and Cys-812/Cys-825. The catalytic subdomain A stretch occupies residues 485-594 (LPTTSIIMCF…VGWLEPLLER (110 aa)). 2 residues coordinate substrate: Asp-526 and Arg-555. The N-linked (GlcNAc...) asparagine glycan is linked to Asn-568. Asp-578 serves as a coordination point for Mn(2+). Residue Ser-579 coordinates substrate. His-580 contacts Mn(2+). The segment at 654 to 716 (IIRCPVMAGG…PCSRVGHIFR (63 aa)) is catalytic subdomain B. Trp-685 provides a ligand contact to substrate. His-713 lines the Mn(2+) pocket. Residues Arg-716 and Tyr-721 each coordinate substrate. N-linked (GlcNAc...) asparagine glycans are attached at residues Asn-766, Asn-817, and Asn-835. Residues 794-925 (KAPVVRASGV…MELQQKWKFE (132 aa)) form the Ricin B-type lectin domain. Disulfide bonds link Cys-848–Cys-863 and Cys-898–Cys-913. Asn-902 carries an N-linked (GlcNAc...) asparagine glycan.

Belongs to the glycosyltransferase 2 family. GalNAc-T subfamily. As to quaternary structure, interacts with EXT2. Does not interact with EXT1, EXTL1 or EXTL3. Mn(2+) serves as cofactor. In terms of tissue distribution, expressed at low level. Not expressed before E7.5 during embryogenesis. Expressed in dental mesenchyme and tongue. Accumulates in a subset of mesenchymal cells at the ventral-most portions of the 12.5 dpc maxilla and mandible underlying the dental lamina.

It is found in the golgi apparatus membrane. The catalysed reaction is L-seryl-[protein] + UDP-N-acetyl-alpha-D-galactosamine = a 3-O-[N-acetyl-alpha-D-galactosaminyl]-L-seryl-[protein] + UDP + H(+). It carries out the reaction L-threonyl-[protein] + UDP-N-acetyl-alpha-D-galactosamine = a 3-O-[N-acetyl-alpha-D-galactosaminyl]-L-threonyl-[protein] + UDP + H(+). The protein operates within protein modification; protein glycosylation. In terms of biological role, catalyzes the initial reaction in O-linked oligosaccharide biosynthesis, the transfer of an N-acetyl-D-galactosamine residue to a serine or threonine residue on the protein receptor. Has activity toward EA2 peptide substrate, but has a weak activity toward Muc2 or Muc1b substrates. The protein is Polypeptide N-acetylgalactosaminyltransferase 5 (Galnt5) of Mus musculus (Mouse).